Consider the following 764-residue polypeptide: MTSPSSSPVFRLETLDGGQEDGSEADRGKLDFGSGLPPMESQFQGEDRKFAPQIRVNLNYRKGTGASQPDPNRFDRDRLFNAVSRGVPEDLAGLPEYLSKTSKYLTDSEYTEGSTGKTCLMKAVLNLKDGVNACILPLLQIDRDSGNPQPLVNAQCTDDYYRGHSALHIAIEKRSLQCVKLLVENGANVHARACGRFFQKGQGTCFYFGELPLSLAACTKQWDVVSYLLENPHQPASLQATDSQGNTVLHALVMISDNSAENIALVTSMYDGLLQAGARLCPTVQLEDIRNLQDLTPLKLAAKEGKIEIFRHILQREFSGLSHLSRKFTEWCYGPVRVSLYDLASVDSCEENSVLEIIAFHCKSPHRHRMVVLEPLNKLLQAKWDLLIPKFFLNFLCNLIYMFIFTAVAYHQPTLKKQAAPHLKAEVGNSMLLTGHILILLGGIYLLVGQLWYFWRRHVFIWISFIDSYFEILFLFQALLTVVSQVLCFLAIEWYLPLLVSALVLGWLNLLYYTRGFQHTGIYSVMIQKVILRDLLRFLLIYLVFLFGFAVALVSLSQEAWRPEAPTGPNATESVQPMEGQEDEGNGAQYRGILEASLELFKFTIGMGELAFQEQLHFRGMVLLLLLAYVLLTYILLLNMLIALMSETVNSVATDSWSIWKLQKAISVLEMENGYWWCRKKQRAGVMLTVGTKPDGSPDERWCFRVEEVNWASWEQTLPTLCEDPSGAGVPRTLENPVLASPPKEDEDGASEENYVPVQLLQSN.

The segment at 1–46 is disordered; the sequence is MTSPSSSPVFRLETLDGGQEDGSEADRGKLDFGSGLPPMESQFQGE. Residues 1–388 form a required for interaction with SLC50A1 region; it reads MTSPSSSPVF…LLQAKWDLLI (388 aa). The Cytoplasmic portion of the chain corresponds to 1–390; that stretch reads MTSPSSSPVF…QAKWDLLIPK (390 aa). Ser-6 is modified (phosphoserine). ANK repeat units follow at residues 72-114, 115-161, 162-207, 208-243, 244-292, and 293-319; these read NRFD…TEGS, TGKT…DDYY, RGHS…TCFY, FGEL…ATDS, QGNT…IRNL, and QDLT…REFS. Residues 391 to 411 form a helical membrane-spanning segment; it reads FFLNFLCNLIYMFIFTAVAYH. Residues 412-434 lie on the Extracellular side of the membrane; it reads QPTLKKQAAPHLKAEVGNSMLLT. A helical membrane pass occupies residues 435–455; it reads GHILILLGGIYLLVGQLWYFW. At 456–471 the chain is on the cytoplasmic side; the sequence is RRHVFIWISFIDSYFE. The helical transmembrane segment at 472-492 threads the bilayer; the sequence is ILFLFQALLTVVSQVLCFLAI. Residue Glu-493 is a topological domain, extracellular. The chain crosses the membrane as a helical span at residues 494 to 514; the sequence is WYLPLLVSALVLGWLNLLYYT. At 515–537 the chain is on the cytoplasmic side; sequence RGFQHTGIYSVMIQKVILRDLLR. A helical membrane pass occupies residues 538-558; it reads FLLIYLVFLFGFAVALVSLSQ. The interval 562–585 is disordered; that stretch reads RPEAPTGPNATESVQPMEGQEDEG. N-linked (GlcNAc...) asparagine glycosylation is present at Asn-570. An intramembrane region (pore-forming) is located at residues 572 to 609; sequence TESVQPMEGQEDEGNGAQYRGILEASLELFKFTIGMGE. A helical transmembrane segment spans residues 622 to 642; the sequence is VLLLLLAYVLLTYILLLNMLI. At 643–764 the chain is on the cytoplasmic side; that stretch reads ALMSETVNSV…YVPVQLLQSN (122 aa). The segment at 725–756 is disordered; the sequence is PSGAGVPRTLENPVLASPPKEDEDGASEENYV. Residues Ser-751 and Ser-763 each carry the phosphoserine modification.

Belongs to the transient receptor (TC 1.A.4) family. TrpV subfamily. TRPV2 sub-subfamily. As to quaternary structure, homotetramer. Interacts with a cAMP-dependent protein kinase type II regulatory subunit (PRKAR2A or PRKAR2B) and ACBD3. Interacts with SLC50A1; the interaction probably occurs intracellularly and depends on TRPV2 N-glycosylation. N-glycosylated. In terms of processing, phosphorylated by PKA.

The protein localises to the cell membrane. Its subcellular location is the cytoplasm. It is found in the melanosome. It carries out the reaction Ca(2+)(in) = Ca(2+)(out). The enzyme catalyses Mg(2+)(in) = Mg(2+)(out). The catalysed reaction is Na(+)(in) = Na(+)(out). It catalyses the reaction K(+)(in) = K(+)(out). Its function is as follows. Calcium-permeable, non-selective cation channel with an outward rectification. Seems to be regulated, at least in part, by IGF1, PDGF and neuropeptide head activator. May transduce physical stimuli in mast cells. Activated by temperatures higher than 52 degrees Celsius; is not activated by vanilloids and acidic pH. This is Transient receptor potential cation channel subfamily V member 2 (TRPV2) from Homo sapiens (Human).